The sequence spans 200 residues: BREX protein BrxB (200 aa).

It belongs to the BrxB family.

BREX systems (bacteriophage exclusion) provide immunity against bacteriophage. Part of a type 1 BREX system which protects against dsDNA phage. This system allows phage adsorption but prevents phage DNA replication, without degradation of the phage DNA. Methylation of bacterial DNA by PglX guides self/non-self discrimination. When the brxA-brxB-brxC-pglX-pglZ-brxL genes are transformed into a susceptible E.coli strain (BW25113) they confer very high resistance to infection by bacteriophage VR7 and VpaE1, about 100-fold protection against lambda, T5 and T7 and no protection against RNA phage Qbeta, ssDNA phage M13 or dSDNA phage T4 and VR5. Glycosylated phage DNA is not susceptible to BREX. The BREX system does not confer resistance to lysogenic lambda phage, i.e. prophage that are integrated into the chromosomal DNA and then induced to form phage. The protein is BREX protein BrxB of Escherichia coli O9:H4 (strain HS).